A 269-amino-acid polypeptide reads, in one-letter code: Eukaryotic translation initiation factor 3 subunit G-1 (269 aa).

Residues 188–266 (AAIRISNLSE…LILSVEWSKP (79 aa)) form the RRM domain.

The protein belongs to the eIF-3 subunit G family. As to quaternary structure, component of the eukaryotic translation initiation factor 3 (eIF-3) complex. The eIF-3 complex interacts with pix.

It localises to the cytoplasm. Functionally, RNA-binding component of the eukaryotic translation initiation factor 3 (eIF-3) complex, which is involved in protein synthesis of a specialized repertoire of mRNAs and, together with other initiation factors, stimulates binding of mRNA and methionyl-tRNAi to the 40S ribosome. The eIF-3 complex specifically targets and initiates translation of a subset of mRNAs involved in cell proliferation. This subunit can bind 18S rRNA. This Drosophila grimshawi (Hawaiian fruit fly) protein is Eukaryotic translation initiation factor 3 subunit G-1.